We begin with the raw amino-acid sequence, 144 residues long: Small ribosomal subunit protein eS12z (144 aa).

The residue at position 2 (S2) is an N-acetylserine.

The protein belongs to the eukaryotic ribosomal protein eS12 family.

This Arabidopsis thaliana (Mouse-ear cress) protein is Small ribosomal subunit protein eS12z (RPS12A).